The sequence spans 464 residues: Sugar transporter ERD6-like 1 (464 aa).

12 helical membrane passes run 23–43 (ITCGLLLSTSVAVTGSFVYGC), 72–92 (VMTLGGMITAAFSGKIAAVIG), 95–115 (QTMWIADVFCIFGWLAVAFAH), 125–145 (GFLGFGVGLISYVVPVYIAEI), 156–176 (FSNQLLQSFGISLMFFTGNFF), 180–200 (TLALLSAIPCGIQMICLFFIP), 263–283 (LIIGLGLMLLQQFCGSSAISA), 298–318 (IGTSILAVILVPQSIIVMFAV), 326–346 (LLMSSSIGLCICSFLIGLSYY), 359–379 (PILIVGLVGYVLSFGIGLGGL), 399–419 (LVTVSNWFFSWIIIFSFNFMM), and 424–444 (FGTYFIFAGVSLMSFVFVWTL).

This sequence belongs to the major facilitator superfamily. Sugar transporter (TC 2.A.1.1) family.

Its subcellular location is the membrane. Its function is as follows. Sugar transporter. In Arabidopsis thaliana (Mouse-ear cress), this protein is Sugar transporter ERD6-like 1 (SUGTL4).